A 311-amino-acid chain; its full sequence is Porphobilinogen deaminase (311 aa).

Cysteine 243 is subject to S-(dipyrrolylmethanemethyl)cysteine.

This sequence belongs to the HMBS family. As to quaternary structure, monomer. Requires dipyrromethane as cofactor.

It catalyses the reaction 4 porphobilinogen + H2O = hydroxymethylbilane + 4 NH4(+). Its pathway is porphyrin-containing compound metabolism; protoporphyrin-IX biosynthesis; coproporphyrinogen-III from 5-aminolevulinate: step 2/4. Tetrapolymerization of the monopyrrole PBG into the hydroxymethylbilane pre-uroporphyrinogen in several discrete steps. In Aliivibrio fischeri (strain ATCC 700601 / ES114) (Vibrio fischeri), this protein is Porphobilinogen deaminase.